The chain runs to 432 residues: Hexuronate transporter (432 aa).

The signal sequence occupies residues 1-31 (MRKIKGLRWYMIALVTLGTVLGYLTRNTVAA). Residues 33–48 (APTLMEELNISTQQYS) lie on the Periplasmic side of the membrane. A helical transmembrane segment spans residues 49–69 (YIIAAYSAAYTVMQPVAGYVL). At 70 to 75 (DVLGTK) the chain is on the cytoplasmic side. The chain crosses the membrane as a helical span at residues 76–96 (IGYAMFAVLWAVFCGATALAG). The Periplasmic segment spans residues 97-99 (SWG). Residues 100–120 (GLAVARGAVGAAEAAMIPAGL) traverse the membrane as a helical segment. Residues 121–138 (KASSEWFPAKERSIAVGY) lie on the Cytoplasmic side of the membrane. The helical transmembrane segment at 139–159 (FNVGSSIGAMIAPPLVVWAIV) threads the bilayer. Topologically, residues 160-164 (MHSWQ) are periplasmic. Residues 165-185 (MAFIISGALSFIWAMAWLIFY) form a helical membrane-spanning segment. Residues 186–236 (KHPRDQKHLTDEERDYIINGQEAQHQVSTAKKMSVGQILRNRQFWGIALPR) are Cytoplasmic-facing. The chain crosses the membrane as a helical span at residues 237 to 257 (FLAEPAWGTFNAWIPLFMFKV). Over 258–264 (YGFNLKE) the chain is Periplasmic. A helical membrane pass occupies residues 265-285 (IAMFAWMPMLFADLGCILGGY). The Cytoplasmic portion of the chain corresponds to 286–293 (LPPLFQRW). Residues 294–314 (FGVNLIVSRKMVVTLGAVLMI) form a helical membrane-spanning segment. The Periplasmic portion of the chain corresponds to 315 to 317 (GPG). Residues 318-338 (MIGLFTNPYVAIMLLCIGGFA) form a helical membrane-spanning segment. Residues 339-369 (HQALSGALITLSSDVFGRNEVATANGLTGMS) lie on the Cytoplasmic side of the membrane. A helical transmembrane segment spans residues 370-390 (AWLASTLFALVVGALADTIGF). S391 is a topological domain (periplasmic). Residues 392–412 (PLFAVLAVFDLLGALVIWTVL) form a helical membrane-spanning segment. Topologically, residues 413–432 (QNKPAIEVAQETHNDPAPQH) are cytoplasmic.

It belongs to the major facilitator superfamily. Phthalate permease family.

Its subcellular location is the cell inner membrane. It catalyses the reaction aldehydo-D-glucuronate(in) + H(+)(in) = aldehydo-D-glucuronate(out) + H(+)(out). The catalysed reaction is aldehydo-D-galacturonate(out) + H(+)(out) = aldehydo-D-galacturonate(in) + H(+)(in). Its function is as follows. Transport of aldohexuronates such as D-glucuronate and D-galacturonate. In Escherichia coli O157:H7, this protein is Hexuronate transporter (exuT).